Reading from the N-terminus, the 591-residue chain is Phenylalanine--tRNA ligase beta subunit (591 aa).

The B5 domain occupies 304 to 380 (LSYREMTVTT…VAFGYNNLIT (77 aa)). Mg(2+)-binding residues include aspartate 358, aspartate 364, glutamate 367, and aspartate 368.

It belongs to the phenylalanyl-tRNA synthetase beta subunit family. Type 2 subfamily. In terms of assembly, tetramer of two alpha and two beta subunits. Mg(2+) serves as cofactor.

It localises to the cytoplasm. It carries out the reaction tRNA(Phe) + L-phenylalanine + ATP = L-phenylalanyl-tRNA(Phe) + AMP + diphosphate + H(+). This Caenorhabditis elegans protein is Phenylalanine--tRNA ligase beta subunit.